A 219-amino-acid chain; its full sequence is Transmembrane protein 17A (219 aa).

Asn18 and Asn27 each carry an N-linked (GlcNAc...) asparagine glycan. Helical transmembrane passes span 56–76, 83–103, 121–141, and 153–173; these read MMLY…LLML, LPVY…IFEV, LAGF…FFIT, and AVHS…FLAL.

The protein belongs to the TMEM17 family. As to quaternary structure, part of the tectonic-like complex (also named B9 complex).

Its subcellular location is the cell projection. It is found in the cilium membrane. In terms of biological role, transmembrane component of the tectonic-like complex, a complex localized at the transition zone of primary cilia and acting as a barrier that prevents diffusion of transmembrane proteins between the cilia and plasma membranes. Required for ciliogenesis and sonic hedgehog/SHH signaling. The sequence is that of Transmembrane protein 17A (tmem17a) from Danio rerio (Zebrafish).